The sequence spans 166 residues: NAD(P)H-quinone oxidoreductase subunit I, chloroplastic (166 aa).

2 4Fe-4S ferredoxin-type domains span residues 55-84 (GRIH…VDWK) and 95-124 (LNYS…MTEE). 8 residues coordinate [4Fe-4S] cluster: Cys-64, Cys-67, Cys-70, Cys-74, Cys-104, Cys-107, Cys-110, and Cys-114.

This sequence belongs to the complex I 23 kDa subunit family. NDH is composed of at least 16 different subunits, 5 of which are encoded in the nucleus. Requires [4Fe-4S] cluster as cofactor.

Its subcellular location is the plastid. The protein resides in the chloroplast thylakoid membrane. The catalysed reaction is a plastoquinone + NADH + (n+1) H(+)(in) = a plastoquinol + NAD(+) + n H(+)(out). The enzyme catalyses a plastoquinone + NADPH + (n+1) H(+)(in) = a plastoquinol + NADP(+) + n H(+)(out). Its function is as follows. NDH shuttles electrons from NAD(P)H:plastoquinone, via FMN and iron-sulfur (Fe-S) centers, to quinones in the photosynthetic chain and possibly in a chloroplast respiratory chain. The immediate electron acceptor for the enzyme in this species is believed to be plastoquinone. Couples the redox reaction to proton translocation, and thus conserves the redox energy in a proton gradient. This is NAD(P)H-quinone oxidoreductase subunit I, chloroplastic from Acanthospermum australe (Paraguayan starburr).